The primary structure comprises 348 residues: D-alanine--D-alanine ligase (348 aa).

The ATP-grasp domain maps to 132 to 334 (KRVLESAGIA…YPDLIEKLVA (203 aa)). ATP is bound at residue 162–217 (EEKLSYPVFTKPSNMGSSVGISKSDNQEELRASLDLAFKYDSRVLVEQGVTAREIE). Aspartate 288, glutamate 301, and asparagine 303 together coordinate Mg(2+).

The protein belongs to the D-alanine--D-alanine ligase family. The cofactor is Mg(2+). Requires Mn(2+) as cofactor.

The protein localises to the cytoplasm. It catalyses the reaction 2 D-alanine + ATP = D-alanyl-D-alanine + ADP + phosphate + H(+). It participates in cell wall biogenesis; peptidoglycan biosynthesis. In terms of biological role, cell wall formation. This is D-alanine--D-alanine ligase from Streptococcus gordonii (strain Challis / ATCC 35105 / BCRC 15272 / CH1 / DL1 / V288).